We begin with the raw amino-acid sequence, 470 residues long: Probable V-type proton ATPase subunit H 2 (470 aa).

The protein belongs to the V-ATPase H subunit family. In terms of assembly, V-ATPase is a heteromultimeric enzyme made up of two complexes: the ATP-hydrolytic V1 complex and the proton translocation V0 complex. The V1 complex consists of three catalytic AB heterodimers that form a heterohexamer, three peripheral stalks each consisting of EG heterodimers, one central rotor including subunits D and F, and the regulatory subunits C and H. The proton translocation complex V0 consists of the proton transport subunit a, a ring of proteolipid subunits c9c'', rotary subunit d, subunits e and f, and the accessory subunits vah-19/Ac45 and vah-20/PRR.

In terms of biological role, subunit of the V1 complex of vacuolar(H+)-ATPase (V-ATPase), a multisubunit enzyme composed of a peripheral complex (V1) that hydrolyzes ATP and a membrane integral complex (V0) that translocates protons. V-ATPase is responsible for acidifying and maintaining the pH of intracellular compartments and in some cell types, is targeted to the plasma membrane, where it is responsible for acidifying the extracellular environment. Subunit H is essential for V-ATPase activity, but not for the assembly of the complex. This chain is Probable V-type proton ATPase subunit H 2, found in Caenorhabditis elegans.